Here is a 339-residue protein sequence, read N- to C-terminus: Cytochrome c biogenesis protein CcsA (339 aa).

The next 7 helical transmembrane spans lie at 6–26, 37–57, 71–91, 97–117, 142–162, 247–267, and 281–299; these read LEHILAHISFFLPFLATLVFW, IGSLGNKSIIIAYICITGLLL, LYESFMFLSWSFCLIHIVSEI, WLGIIIVLIAMLTHGFATVGL, MMIPSYATLPCGSLLVIALLI, IISLGSLFLTIGILSGAVWVN, and TWALITWLLSAIHIHIRMI.

This sequence belongs to the CcmF/CycK/Ccl1/NrfE/CcsA family. As to quaternary structure, may interact with Ccs1.

Its subcellular location is the plastid. The protein resides in the chloroplast thylakoid membrane. Functionally, required during biogenesis of c-type cytochromes (cytochrome c6 and cytochrome f) at the step of heme attachment. The protein is Cytochrome c biogenesis protein CcsA of Anthoceros angustus (Hornwort).